We begin with the raw amino-acid sequence, 351 residues long: MGMLVPLISKISDLSEEAKACVAACSSVEELDEVRGRYIGRAGALTALLRQISTIQDMDERKAVGSAANAACAALKLAIQDRESQLAREQLHSRLASERIDVTLPARPRTCGKIHPISGVIREISSILSELGFAVVHGPELEDEFHVFDALNTPEHHPARAENDTFYMTKRLNGRRVVLRTHTSSMQIRAMESNPNPPIKIISPGRVYRNDWDATHSPVFHQVEGLFVDKHVTMGHLKYCINYFLSRFFARKVETRMRASFFPFTEPSAEIDVKDRHQKWVEVLGCGMVHPAVLENVNIDPEKYRGFAFGMGVERMAMLKYGITDLRNFYSNKLEWLNHYGFCFTDILGRA.

E266 contributes to the Mg(2+) binding site.

It belongs to the class-II aminoacyl-tRNA synthetase family. Phe-tRNA synthetase alpha subunit type 1 subfamily. Tetramer of two alpha and two beta subunits. Mg(2+) is required as a cofactor.

It localises to the cytoplasm. It catalyses the reaction tRNA(Phe) + L-phenylalanine + ATP = L-phenylalanyl-tRNA(Phe) + AMP + diphosphate + H(+). This is Phenylalanine--tRNA ligase alpha subunit from Anaplasma marginale (strain St. Maries).